A 233-amino-acid polypeptide reads, in one-letter code: Large ribosomal subunit protein uL1 (233 aa).

This sequence belongs to the universal ribosomal protein uL1 family. As to quaternary structure, part of the 50S ribosomal subunit.

In terms of biological role, binds directly to 23S rRNA. The L1 stalk is quite mobile in the ribosome, and is involved in E site tRNA release. Protein L1 is also a translational repressor protein, it controls the translation of the L11 operon by binding to its mRNA. The polypeptide is Large ribosomal subunit protein uL1 (Vibrio cholerae serotype O1 (strain ATCC 39315 / El Tor Inaba N16961)).